A 284-amino-acid polypeptide reads, in one-letter code: Tropomyosin (284 aa).

Positions 1 to 284 (MEAIKKKMQA…DQTFAELTGY (284 aa)) form a coiled coil.

It belongs to the tropomyosin family. Homodimer.

Tropomyosin, in association with the troponin complex, plays a central role in the calcium dependent regulation of muscle contraction. The protein is Tropomyosin of Dermatophagoides farinae (American house dust mite).